A 612-amino-acid chain; its full sequence is Netrin unc-6 (612 aa).

A signal peptide spans 1–21; sequence MITSVLRYVLALYFCMGIAHG. Residues 43 to 290 enclose the Laminin N-terminal domain; sequence RPVRCVPEFI…SMGELAVGGR (248 aa). 3 N-linked (GlcNAc...) asparagine glycosylation sites follow: Asn-114, Asn-128, and Asn-268. Cys-117 and Cys-149 form a disulfide bridge. Cystine bridges form between Cys-291–Cys-300, Cys-293–Cys-310, Cys-312–Cys-321, Cys-324–Cys-344, Cys-347–Cys-356, Cys-349–Cys-374, Cys-377–Cys-386, Cys-389–Cys-407, Cys-410–Cys-422, Cys-412–Cys-429, Cys-431–Cys-440, Cys-443–Cys-457, Cys-478–Cys-547, and Cys-494–Cys-604. Laminin EGF-like domains are found at residues 291–346, 347–409, and 410–459; these read CKCN…SCVA, CNCN…ACKS, and CGCH…PCIK. Asn-368 is a glycosylation site (N-linked (GlcNAc...) asparagine). N-linked (GlcNAc...) asparagine glycosylation is present at Asn-423. Positions 478 to 604 constitute an NTR domain; sequence CSKCRIVPKR…FSKKDKLGQC (127 aa). Asn-564 carries N-linked (GlcNAc...) asparagine glycosylation.

In terms of assembly, binds to unc-5 and unc-40 receptors.

It localises to the secreted. The protein resides in the extracellular space. The protein localises to the extracellular matrix. It is found in the basement membrane. Component of an extracellular matrix cue that guides dorsoventral migrations on the epidermis. Required for the guidance of pioneer axons and migrating cells along the body wall. In particular, it is required for the guidance of axons from neurons, including SubL neurons and AIY interneurons, into the nerve ring. During gonad morphogenesis, involved in distal tip cell (DTC) migration from the dorsal side of the hermaphrodite body to the midbody to allow for formation of gonad arms. Its association with either unc-40 or unc-5 receptors will lead to axon attraction or repulsion, respectively. Involved in dendritic morphogenesis; may act by association with unc-40 at the tips of growing dendrites for interaction with unc-5 on the apposing branch to induce mutual repulsion. Involved in the positioning of ray 1, the most anterior ray sensilium, in the male tail. Required for the formation of synapses between the AVA interneurons and the PHB sensory neurons. The sequence is that of Netrin unc-6 from Caenorhabditis elegans.